The chain runs to 1401 residues: Alpha-latrotoxin-Lt1a (1401 aa).

A signal peptide spans 1–20 (MISVGEIMERANHSLVRMRR). The interval 17–20 (RMRR) is furin-like endopeptidase recognition region. The interval 238-257 (VLYALLYGTQTYVSVMFFLL) is helix H8 is the probable transmembrane region of the tetrameric pore inserted in the target cell membrane. An intrachain disulfide couples C413 to C1066. 22 ANK repeats span residues 458 to 489 (LYNAASNPDSAVGFKEFTKLNYDGANIRATFD), 490 to 521 (HGRTVFHAAAKSGNDKIMFGLTFLAKSTELNQ), 525 to 554 (KGYTPIHVAADSGNAGIVNLLIQRGVSINS), 559 to 589 (FLQTPLHLAAQRGFVTTFQRLMESPEININE), 593 to 622 (DGFTPLHYAIRGGERILEAFLNQISIDVNA), 626 to 656 (TGLTPFHLAIIKNDWPVASTLLGSKKVDINA), 660 to 690 (NNITALHYAAILGYLETTKQLINLKEINANV), 695 to 723 (GLLSALHYAILYKHDDVASFLMRSSNVNV), 729 to 758 (GGITPLHLAVIQGRKQILSLMFDIGVNIEQ), 762 to 791 (EKYTPLHLAAMSKYPELIQILLDQGSNFEA), 795 to 824 (SGATPLHLATFKGKSQAALILLNNEVNWRD), 828 to 857 (NGQMPIHGAAMTGLLDVAQAIISIDATVVD), 862 to 891 (NSDTPLNLAAQNSHIDVIKYFIDQGADINT), 895 to 924 (KGLAPLLAFSKKGNLDMVKYLFDKNANVYI), 928 to 957 (DGMNFFYYAVQNGHLNIVKYAMSEKDKFEW), 971 to 1003 (EECAISHFAVCDAVQFDRIEIVKYFVGTLGNFA), 1004 to 1033 (ICGPLHQAARYGHLDIVKYLVEEEFLSVDG), 1035 to 1064 (KTDTPLCYASENGHFTVVQYLVSNGAKVNH), 1068 to 1097 (NGMTAIDKAITKNHLQVVQFLAANGVDFRR), 1101 to 1131 (RGTTPFLTAVAENALHIAEYLIREKRQDINI), 1137 to 1166 (DKDTALHLAVYYKNLQMIKLLIKYGIDVTI), and 1170 to 1199 (YDKTALDIAIDAKFSNIVEYLKTKSGKFRR). The interval 1026-1032 (EEFLSVD) is 4C4.1 epitope. The segment at 1196–1199 (KFRR) is furin-like endopeptidase recognition region. A propeptide spanning residues 1200-1401 (EYKSSYGERS…SDGILTKKLM (202 aa)) is cleaved from the precursor.

Belongs to the cationic peptide 01 (latrotoxin) family. 03 (alpha-latrotoxin) subfamily. Homotetramer in membranes. In terms of processing, processed by furin-like proteases at both the N- and C-termini. In terms of tissue distribution, expressed in venom gland, cephalothorax, and abdomen tissues from both males and females.

The protein resides in the secreted. It localises to the target cell membrane. Functionally, presynaptic neurotoxin that causes massive release of neurotransmitters from vertebrate (but not invertebrate) nerve terminals and endocrine cells via a complex mechanism involving activation of receptor(s) and toxin insertion into the plasma membrane with subsequent pore formation. Binds to neurexin-1-alpha (NRXN1) in a calcium dependent manner, adhesion G protein-coupled receptor L1 (ADGRL1, also termed latrophilin-1 and calcium-independent receptor of latrotoxin (CIRL)), and receptor-type tyrosine-protein phosphatase S (PTPRS), also termed PTP sigma. NRXN1 and PTPRS are suggested to provide a platform for binding and subsequent pore formation events. In contrast, binding to ADGRL1 does not involve oligomerization and channel formation, but direct downstream stimulation of the synaptic fusion machinery. The polypeptide is Alpha-latrotoxin-Lt1a (Latrodectus tredecimguttatus (Mediterranean black widow spider)).